A 517-amino-acid polypeptide reads, in one-letter code: MDIVGGQNLRQMWDDLAEVYGDKTALIFESCEGIVRQFSYASLNEEINRTANLFHSLGIRKGDRVALHLDNCPEFIFCWFGLAKIGAIMVPINARLLGEESAWILQNSQVSLLVTSAQFYPMYREIRQGNSTPLNHICLIGEQLPADDGVSLFSQLQARQSATLCYTPALSTDDAAEILFTSGTTSRPKGVVITHYNLRFAGYYSAWQIALRDDDVYMTVMPAFHIDCQCTAAMPAFSAGSTFVLLEKYSARAFWGQVRKYQATVTECIPMMIRTLMVQPAAPTDRQHHLREVMFYLNLSAQEKDAFTERFGVRLLTSYGMTETIVGIIGDRPGDKRRWPSIGRVGFSYEAEIRDDQNRPLPAGEIGEICIKGIPGKTIFKEYYMQPEATARALEPEGWLHTGDSGYQDEDGYFYFVDRRCNMIKRGGENVSCVELENIISAHPKIQDIVVVGIKDAIRDEAIKAFIVLNEGETLSEAEFFSFCENNMAKFKVPSFMEIRTDLPRNCSGKIIKKNLK.

It belongs to the ATP-dependent AMP-binding enzyme family.

The enzyme catalyses 4-(trimethylamino)butanoate + ATP + CoA = 4-(trimethylamino)butanoyl-CoA + AMP + diphosphate. It carries out the reaction crotonobetaine + ATP + CoA = crotonobetainyl-CoA + AMP + diphosphate. It catalyses the reaction (R)-carnitine + ATP + CoA = (R)-carnitinyl-CoA + AMP + diphosphate. It functions in the pathway amine and polyamine metabolism; carnitine metabolism. Functionally, catalyzes the transfer of CoA to carnitine, generating the initial carnitinyl-CoA needed for the CaiB reaction cycle. Also has activity toward crotonobetaine and gamma-butyrobetaine. The chain is Crotonobetaine/carnitine--CoA ligase from Salmonella paratyphi A (strain ATCC 9150 / SARB42).